The following is a 245-amino-acid chain: tRNA pseudouridine synthase A (245 aa).

The active-site Nucleophile is the Asp52. Tyr111 serves as a coordination point for substrate.

The protein belongs to the tRNA pseudouridine synthase TruA family. In terms of assembly, homodimer.

It catalyses the reaction uridine(38/39/40) in tRNA = pseudouridine(38/39/40) in tRNA. Functionally, formation of pseudouridine at positions 38, 39 and 40 in the anticodon stem and loop of transfer RNAs. This is tRNA pseudouridine synthase A from Rhodopseudomonas palustris (strain BisB5).